Here is a 1142-residue protein sequence, read N- to C-terminus: Fibronectin type-III domain-containing protein 3A (1142 aa).

The tract at residues 104–191 is disordered; sequence YGDVDAHSTH…KSGKGKGGTQ (88 aa). The span at 107 to 145 shows a compositional bias: basic and acidic residues; sequence VDAHSTHGRSNFRDERSSKTYERLQKKLKDRQGTQKDKM. The segment covering 146-158 has biased composition (low complexity); that stretch reads SSPPSSPQKCPSP. Residues Ser147, Ser151, and Ser157 each carry the phosphoserine modification. 9 consecutive Fibronectin type-III domains span residues 212 to 313, 317 to 409, 413 to 506, 510 to 604, 608 to 701, 705 to 795, 805 to 894, 895 to 989, and 990 to 1095; these read NIVK…TLSC, IPNP…TSGC, MPAS…TCPD, IPVK…TPAV, PCLP…TAPG, QCKP…TPPS, EISD…TKPL, PPDP…TPKS, and VPAA…TEPP. An N6-acetyllysine modification is found at Lys328. A helical transmembrane segment spans residues 1121–1141; sequence NLVLFAFFSILIAFIIQYFVI.

It belongs to the FNDC3 family.

Its subcellular location is the golgi apparatus membrane. Mediates spermatid-Sertoli adhesion during spermatogenesis. This is Fibronectin type-III domain-containing protein 3A (FNDC3A) from Pongo abelii (Sumatran orangutan).